We begin with the raw amino-acid sequence, 672 residues long: Acetoacetyl-CoA synthetase (672 aa).

The protein belongs to the ATP-dependent AMP-binding enzyme family.

The protein resides in the cytoplasm. It is found in the cytosol. The catalysed reaction is acetoacetate + ATP + CoA = acetoacetyl-CoA + AMP + diphosphate. In terms of biological role, converts acetoacetate to acetoacetyl-CoA in the cytosol. Ketone body-utilizing enzyme, responsible for the synthesis of cholesterol and fatty acids. This is Acetoacetyl-CoA synthetase (Aacs) from Mus musculus (Mouse).